The chain runs to 124 residues: Fluoride-specific ion channel FluC (124 aa).

A run of 4 helical transmembrane segments spans residues 1–21 (MVPL…LRFA), 38–58 (TLAV…LFLI), 69–89 (GLMV…LDTV), and 99–119 (LALG…WAGL). Positions 76 and 79 each coordinate Na(+).

It belongs to the fluoride channel Fluc/FEX (TC 1.A.43) family.

The protein resides in the cell inner membrane. The catalysed reaction is fluoride(in) = fluoride(out). Na(+) is not transported, but it plays an essential structural role and its presence is essential for fluoride channel function. Its function is as follows. Fluoride-specific ion channel. Important for reducing fluoride concentration in the cell, thus reducing its toxicity. This is Fluoride-specific ion channel FluC from Pseudomonas fluorescens (strain Pf0-1).